A 312-amino-acid chain; its full sequence is Polyamine aminopropyltransferase (312 aa).

One can recognise a PABS domain in the interval 7–247 (FFWAQEYFTP…GPLGFALAAQ (241 aa)). Q36 provides a ligand contact to S-methyl-5'-thioadenosine. Residues H67 and E95 each coordinate spermidine. S-methyl-5'-thioadenosine-binding positions include D115 and 147 to 148 (DA). D165 serves as the catalytic Proton acceptor. P174 contacts S-methyl-5'-thioadenosine.

This sequence belongs to the spermidine/spermine synthase family. Homodimer or homotetramer.

The protein resides in the cytoplasm. It catalyses the reaction S-adenosyl 3-(methylsulfanyl)propylamine + putrescine = S-methyl-5'-thioadenosine + spermidine + H(+). The protein operates within amine and polyamine biosynthesis; spermidine biosynthesis; spermidine from putrescine: step 1/1. Its function is as follows. Catalyzes the irreversible transfer of a propylamine group from the amino donor S-adenosylmethioninamine (decarboxy-AdoMet) to putrescine (1,4-diaminobutane) to yield spermidine. In Synechococcus sp. (strain JA-3-3Ab) (Cyanobacteria bacterium Yellowstone A-Prime), this protein is Polyamine aminopropyltransferase.